We begin with the raw amino-acid sequence, 765 residues long: ATP-dependent zinc metalloprotease FtsH (765 aa).

The Cytoplasmic portion of the chain corresponds to 1 to 27 (MSNTSNFNERVTENAKPPKNVKSIIWK). The helical transmembrane segment at 28–48 (TIGIIIVMAIIIGLILFYVLP) threads the bilayer. Topologically, residues 49-213 (RNTIANISNI…NVQLPNQSTA (165 aa)) are extracellular. A helical transmembrane segment spans residues 214-234 (ILTQFLTSIIPFVILIVIYIV). At 235–765 (IARRFSRTMG…EPTASTASSN (531 aa)) the chain is on the cytoplasmic side. 314–321 (GPPGTGKT) lines the ATP pocket. Histidine 536 provides a ligand contact to Zn(2+). The active site involves glutamate 537. Zn(2+) contacts are provided by histidine 540 and aspartate 615. Residues 730–748 (KAAAEKEEQAEKAKLDHQS) show a composition bias toward basic and acidic residues. Positions 730–765 (KAAAEKEEQAEKAKLDHQSDSAQPQEEPTASTASSN) are disordered. Residues 749–765 (DSAQPQEEPTASTASSN) are compositionally biased toward polar residues.

This sequence in the central section; belongs to the AAA ATPase family. The protein in the C-terminal section; belongs to the peptidase M41 family. Homohexamer. Zn(2+) serves as cofactor.

Its subcellular location is the cell membrane. Acts as a processive, ATP-dependent zinc metallopeptidase for both cytoplasmic and membrane proteins. Plays a role in the quality control of integral membrane proteins. The sequence is that of ATP-dependent zinc metalloprotease FtsH from Mycoplasmoides gallisepticum (strain R(high / passage 156)) (Mycoplasma gallisepticum).